A 642-amino-acid chain; its full sequence is Restriction of telomere capping protein 5 (642 aa).

The segment at 143–186 (RRGAGQPPDENADNKEEDKSSTAKSHATGFAVDDPANDNYEDDE) is disordered. Basic and acidic residues predominate over residues 154–163 (ADNKEEDKSS). Positions 177 to 186 (PANDNYEDDE) are enriched in acidic residues. Residues 353-571 (TILKPSAISH…IYTLEVWGLV (219 aa)) enclose the TLDc domain.

The protein belongs to the RTC5 family.

It localises to the cytoplasm. Its function is as follows. May be involved in a process influencing telomere capping. In Aspergillus clavatus (strain ATCC 1007 / CBS 513.65 / DSM 816 / NCTC 3887 / NRRL 1 / QM 1276 / 107), this protein is Restriction of telomere capping protein 5 (rtc5).